A 284-amino-acid chain; its full sequence is Bifunctional protein FolD (284 aa).

Residues 165–167 (GRS) and Ser-190 contribute to the NADP(+) site.

It belongs to the tetrahydrofolate dehydrogenase/cyclohydrolase family. In terms of assembly, homodimer.

The catalysed reaction is (6R)-5,10-methylene-5,6,7,8-tetrahydrofolate + NADP(+) = (6R)-5,10-methenyltetrahydrofolate + NADPH. The enzyme catalyses (6R)-5,10-methenyltetrahydrofolate + H2O = (6R)-10-formyltetrahydrofolate + H(+). Its pathway is one-carbon metabolism; tetrahydrofolate interconversion. In terms of biological role, catalyzes the oxidation of 5,10-methylenetetrahydrofolate to 5,10-methenyltetrahydrofolate and then the hydrolysis of 5,10-methenyltetrahydrofolate to 10-formyltetrahydrofolate. The chain is Bifunctional protein FolD from Streptococcus uberis (strain ATCC BAA-854 / 0140J).